A 540-amino-acid polypeptide reads, in one-letter code: Probable protein kinase UbiB (540 aa).

Residues 24–44 (LLFDQPLLPWWLASLRLLMPW) form a helical membrane-spanning segment. In terms of domain architecture, Protein kinase spans 126-494 (RFDVEPLASA…RRRQGDRWAL (369 aa)). Residues 132-140 (LASASVAQV) and K154 each bind ATP. The active-site Proton acceptor is the D289. Transmembrane regions (helical) follow at residues 496–516 (LLGA…AETA) and 518–538 (LAAP…YLIV).

It belongs to the ABC1 family. UbiB subfamily.

The protein localises to the cell inner membrane. Its pathway is cofactor biosynthesis; ubiquinone biosynthesis [regulation]. Is probably a protein kinase regulator of UbiI activity which is involved in aerobic coenzyme Q (ubiquinone) biosynthesis. In Pseudomonas putida (strain ATCC 700007 / DSM 6899 / JCM 31910 / BCRC 17059 / LMG 24140 / F1), this protein is Probable protein kinase UbiB.